The primary structure comprises 339 residues: 4-amino-5-hydroxymethyl-2-methylpyrimidine phosphate synthase (339 aa).

N6-(pyridoxal phosphate)lysine is present on Lys62. Residue His66 is part of the active site. A pyridoxal 5'-phosphate-binding site is contributed by 115–118; sequence GEFG. Positions 195 to 199 match the CCCFC; essential for catalytic activity, may be the site of iron coordination motif; sequence CCCFC.

Belongs to the NMT1/THI5 family. In terms of assembly, homodimer. Requires Fe(3+) as cofactor.

The enzyme catalyses N(6)-(pyridoxal phosphate)-L-lysyl-[4-amino-5-hydroxymethyl-2-methylpyrimidine phosphate synthase] + L-histidyl-[4-amino-5-hydroxymethyl-2-methylpyrimidine phosphate synthase] + 2 Fe(3+) + 4 H2O = L-lysyl-[4-amino-5-hydroxymethyl-2-methylpyrimidine phosphate synthase] + (2S)-2-amino-5-hydroxy-4-oxopentanoyl-[4-amino-5-hydroxymethyl-2-methylpyrimidine phosphate synthase] + 4-amino-2-methyl-5-(phosphooxymethyl)pyrimidine + 3-oxopropanoate + 2 Fe(2+) + 2 H(+). It functions in the pathway cofactor biosynthesis; thiamine diphosphate biosynthesis. In terms of biological role, responsible for the formation of the pyrimidine heterocycle in the thiamine biosynthesis pathway. Catalyzes the formation of hydroxymethylpyrimidine phosphate (HMP-P) from histidine and pyridoxal phosphate (PLP). The protein uses PLP and the active site histidine to form HMP-P, generating an inactive enzyme. The enzyme can only undergo a single turnover, which suggests it is a suicide enzyme. In Candida albicans (strain WO-1) (Yeast), this protein is 4-amino-5-hydroxymethyl-2-methylpyrimidine phosphate synthase.